A 355-amino-acid polypeptide reads, in one-letter code: F-box only protein 32 (355 aa).

The short motif at 62 to 67 is the Nuclear localization signal element; the sequence is KKRKKD. Positions 169 to 173 match the Nuclear export signal motif; the sequence is LLQTL. The F-box domain occupies 223 to 271; it reads LTITDLPVCLQLNIMQRLSDGRDLVSLGQAAPDLHVLSEDRLLWKRLCQ. A Bipartite nuclear localization signal motif is present at residues 280–295; sequence RKRLILSDKGQLDWKK.

As to quaternary structure, part of the SCF (SKP1-CUL1-F-box) E3 ubiquitin-protein ligase complex SCF(FBXO32) formed of CUL1, SKP1, RBX1 and FBXO32. As to expression, specifically expressed in cardiac and skeletal muscle.

Its subcellular location is the cytoplasm. It is found in the nucleus. It participates in protein modification; protein ubiquitination. Substrate recognition component of a SCF (SKP1-CUL1-F-box protein) E3 ubiquitin-protein ligase complex which mediates the ubiquitination and subsequent proteasomal degradation of target proteins. Probably recognizes and binds to phosphorylated target proteins during skeletal muscle atrophy. Recognizes TERF1. In Mus musculus (Mouse), this protein is F-box only protein 32 (Fbxo32).